Consider the following 202-residue polypeptide: Small ribosomal subunit protein uS4 (202 aa).

Over residues M1–R13 the composition is skewed to basic residues. Residues M1–R42 are disordered. The S4 RNA-binding domain maps to N90–N152.

This sequence belongs to the universal ribosomal protein uS4 family. In terms of assembly, part of the 30S ribosomal subunit. Contacts protein S5. The interaction surface between S4 and S5 is involved in control of translational fidelity.

One of the primary rRNA binding proteins, it binds directly to 16S rRNA where it nucleates assembly of the body of the 30S subunit. Its function is as follows. With S5 and S12 plays an important role in translational accuracy. The protein is Small ribosomal subunit protein uS4 of Prochlorococcus marinus (strain MIT 9515).